Here is a 131-residue protein sequence, read N- to C-terminus: Small ribosomal subunit protein uS8 (131 aa).

The protein belongs to the universal ribosomal protein uS8 family. Part of the 30S ribosomal subunit. Contacts proteins S5 and S12.

Functionally, one of the primary rRNA binding proteins, it binds directly to 16S rRNA central domain where it helps coordinate assembly of the platform of the 30S subunit. The protein is Small ribosomal subunit protein uS8 of Polaromonas naphthalenivorans (strain CJ2).